A 206-amino-acid polypeptide reads, in one-letter code: Small ribosomal subunit protein uS4 (206 aa).

Residues 96–156 (SRLDNVVYRM…EKSKNQLRIQ (61 aa)) form the S4 RNA-binding domain.

Belongs to the universal ribosomal protein uS4 family. Part of the 30S ribosomal subunit. Contacts protein S5. The interaction surface between S4 and S5 is involved in control of translational fidelity.

Its function is as follows. One of the primary rRNA binding proteins, it binds directly to 16S rRNA where it nucleates assembly of the body of the 30S subunit. Functionally, with S5 and S12 plays an important role in translational accuracy. The protein is Small ribosomal subunit protein uS4 of Teredinibacter turnerae (strain ATCC 39867 / T7901).